The primary structure comprises 169 residues: Macro domain-containing protein SCO6450 (169 aa).

The Macro domain maps to 1-169; the sequence is MTGITLVQGD…AYEAFAARLG (169 aa).

This sequence belongs to the MacroD-type family.

This chain is Macro domain-containing protein SCO6450, found in Streptomyces coelicolor (strain ATCC BAA-471 / A3(2) / M145).